A 1136-amino-acid chain; its full sequence is Myosin-binding protein C, fast-type (1136 aa).

Disordered stretches follow at residues 1 to 55 and 151 to 177; these read MPEA…KKPD and APRQ…DAGE. A compositionally biased stretch (basic and acidic residues) spans 13–35; that stretch reads KGKDAPKEAPAKQTPEEPPKEAP. Positions 46–149 constitute an Ig-like C2-type 1 domain; it reads PTGIFLKKPD…CDSCSFNVDV (104 aa). Residues 163-174 show a composition bias toward basic and acidic residues; it reads SFKRSGDGKSED. Ig-like C2-type domains lie at 250–339, 340–432, 433–533, and 534–633; these read SAAF…VKEP, PVLI…VEEK, QLEV…KQEP, and PKIH…VVDV. 2 consecutive Fibronectin type-III domains span residues 636–732 and 734–829; these read PPEA…IAPT and APQH…IREI. The 95-residue stretch at 833-927 folds into the Ig-like C2-type 6 domain; sequence PKIRLPRHLR…ATIRIRVVEK (95 aa). Positions 930 to 1025 constitute a Fibronectin type-III 3 domain; the sequence is PAENVMVKEV…SKNTARILKT (96 aa). Residues 1043 to 1136 enclose the Ig-like C2-type 7 domain; it reads PKFLTPLMDR…ECKLDVRVPQ (94 aa).

This sequence belongs to the immunoglobulin superfamily. MyBP family.

Functionally, thick filament-associated protein located in the crossbridge region of vertebrate striated muscle a bands. In vitro it binds MHC, F-actin and native thin filaments, and modifies the activity of actin-activated myosin ATPase. It may modulate muscle contraction or may play a more structural role. This chain is Myosin-binding protein C, fast-type (Mybpc2), found in Mus musculus (Mouse).